A 348-amino-acid chain; its full sequence is MLPIRECVSQTPGYVPGEQPQTTDYIKLNTNENPYPPPDKIFEGLQQELTKVRLYPDPVSTQLRKAAANVFGISYQNILAGNGSDDILNIAVRTFVNPGEVVAFLDLTYSLYETIARVHGASIVQIPTNNQFELNGPIICPEAKLIFVASPNPPVGKHLNRDYLEETCKQATGVVLIDEAYVDFSDENHLDFLEKYDNVIISRTMSKSYSLAGMRVGFGVSSTEIIEQMDKVRDSYNLDRIAQTLGTAVLNYQDYFKGVWQQVRHTRTRLIESLRTLEFLVFDSDSNFVLASPQWIAASDLYTQLKERKVLVRYFSHPRIKDYVRISIGTDQEIDRLLEAIHEIKGSN.

Lysine 207 is modified (N6-(pyridoxal phosphate)lysine).

The protein belongs to the class-II pyridoxal-phosphate-dependent aminotransferase family. Histidinol-phosphate aminotransferase subfamily. Homodimer. Requires pyridoxal 5'-phosphate as cofactor.

The enzyme catalyses L-histidinol phosphate + 2-oxoglutarate = 3-(imidazol-4-yl)-2-oxopropyl phosphate + L-glutamate. Its pathway is amino-acid biosynthesis; L-histidine biosynthesis; L-histidine from 5-phospho-alpha-D-ribose 1-diphosphate: step 7/9. In Rippkaea orientalis (strain PCC 8801 / RF-1) (Cyanothece sp. (strain PCC 8801)), this protein is Histidinol-phosphate aminotransferase.